The sequence spans 445 residues: tRNA-2-methylthio-N(6)-dimethylallyladenosine synthase (445 aa).

Residues 2-122 enclose the MTTase N-terminal domain; the sequence is KKAFVKSYGC…LPDLLARSRE (121 aa). [4Fe-4S] cluster-binding residues include Cys11, Cys47, Cys85, Cys157, Cys161, and Cys164. The Radical SAM core domain maps to 143–378; the sequence is RTLGASAFLT…LDSQRHAYQR (236 aa). The 63-residue stretch at 378–440 folds into the TRAM domain; sequence RAAAGRVFDV…SNSLFGELVS (63 aa).

The protein belongs to the methylthiotransferase family. MiaB subfamily. As to quaternary structure, monomer. Requires [4Fe-4S] cluster as cofactor.

Its subcellular location is the cytoplasm. The catalysed reaction is N(6)-dimethylallyladenosine(37) in tRNA + (sulfur carrier)-SH + AH2 + 2 S-adenosyl-L-methionine = 2-methylsulfanyl-N(6)-dimethylallyladenosine(37) in tRNA + (sulfur carrier)-H + 5'-deoxyadenosine + L-methionine + A + S-adenosyl-L-homocysteine + 2 H(+). Catalyzes the methylthiolation of N6-(dimethylallyl)adenosine (i(6)A), leading to the formation of 2-methylthio-N6-(dimethylallyl)adenosine (ms(2)i(6)A) at position 37 in tRNAs that read codons beginning with uridine. This chain is tRNA-2-methylthio-N(6)-dimethylallyladenosine synthase, found in Methylobacterium radiotolerans (strain ATCC 27329 / DSM 1819 / JCM 2831 / NBRC 15690 / NCIMB 10815 / 0-1).